The following is a 401-amino-acid chain: Probable trafficking protein particle complex subunit 13 homolog (401 aa).

Belongs to the TRAPPC13 family.

This is Probable trafficking protein particle complex subunit 13 homolog from Caenorhabditis briggsae.